Reading from the N-terminus, the 91-residue chain is Small ribosomal subunit protein uS19 (91 aa).

The protein belongs to the universal ribosomal protein uS19 family.

In terms of biological role, protein S19 forms a complex with S13 that binds strongly to the 16S ribosomal RNA. The chain is Small ribosomal subunit protein uS19 from Neorickettsia sennetsu (strain ATCC VR-367 / Miyayama) (Ehrlichia sennetsu).